We begin with the raw amino-acid sequence, 151 residues long: Glutamate mutase sigma subunit 1 (151 aa).

Residues 7 to 140 (PRTVILGVIG…EMLREDLQLT (134 aa)) enclose the B12-binding domain. Adenosylcob(III)alamin-binding positions include 17-21 (SDAHV), H20, 65-67 (SSL), and 96-100 (NLAVG).

The protein belongs to the methylaspartate mutase GlmS subunit family. In terms of assembly, heterotetramer composed of 2 epsilon subunits (GlmE) and 2 sigma subunits (GlmS). GlmE exists as a homodimer and GlmS as a monomer. The cofactor is adenosylcob(III)alamin.

It catalyses the reaction (2S,3S)-3-methyl-L-aspartate = L-glutamate. It participates in amino-acid degradation; L-glutamate degradation via mesaconate pathway; acetate and pyruvate from L-glutamate: step 1/4. In terms of biological role, catalyzes the carbon skeleton rearrangement of L-glutamate to L-threo-3-methylaspartate ((2S,3S)-3-methylaspartate). The chain is Glutamate mutase sigma subunit 1 from Haloarcula marismortui (strain ATCC 43049 / DSM 3752 / JCM 8966 / VKM B-1809) (Halobacterium marismortui).